The following is a 324-amino-acid chain: Putative GTPase PYRAB02490 (324 aa).

GTP is bound by residues 52-60 (GPPGAGKST), aspartate 194, and 229-231 (VAT).

Belongs to the SIMIBI class G3E GTPase family. ArgK/MeaB subfamily.

In terms of biological role, may have GTPase activity. May also bind and hydrolyze ATP. May function as chaperone. This is Putative GTPase PYRAB02490 from Pyrococcus abyssi (strain GE5 / Orsay).